We begin with the raw amino-acid sequence, 376 residues long: Glutamate 5-kinase (376 aa).

Position 15 (K15) interacts with ATP. Substrate contacts are provided by S56, D143, and N155. 175–176 (SD) is an ATP binding site. Positions 281-358 (KGTLTIDAGA…PDVMMILGIT (78 aa)) constitute a PUA domain.

Belongs to the glutamate 5-kinase family.

It localises to the cytoplasm. The enzyme catalyses L-glutamate + ATP = L-glutamyl 5-phosphate + ADP. The protein operates within amino-acid biosynthesis; L-proline biosynthesis; L-glutamate 5-semialdehyde from L-glutamate: step 1/2. In terms of biological role, catalyzes the transfer of a phosphate group to glutamate to form L-glutamate 5-phosphate. The chain is Glutamate 5-kinase from Rhodopseudomonas palustris (strain ATCC BAA-98 / CGA009).